The sequence spans 317 residues: Acetyl-coenzyme A carboxylase carboxyl transferase subunit alpha (317 aa).

Positions 40–293 (LEVRVREAIL…GDVIANALAE (254 aa)) constitute a CoA carboxyltransferase C-terminal domain.

Belongs to the AccA family. In terms of assembly, acetyl-CoA carboxylase is a heterohexamer composed of biotin carboxyl carrier protein (AccB), biotin carboxylase (AccC) and two subunits each of ACCase subunit alpha (AccA) and ACCase subunit beta (AccD).

It localises to the cytoplasm. The catalysed reaction is N(6)-carboxybiotinyl-L-lysyl-[protein] + acetyl-CoA = N(6)-biotinyl-L-lysyl-[protein] + malonyl-CoA. The protein operates within lipid metabolism; malonyl-CoA biosynthesis; malonyl-CoA from acetyl-CoA: step 1/1. Component of the acetyl coenzyme A carboxylase (ACC) complex. First, biotin carboxylase catalyzes the carboxylation of biotin on its carrier protein (BCCP) and then the CO(2) group is transferred by the carboxyltransferase to acetyl-CoA to form malonyl-CoA. This chain is Acetyl-coenzyme A carboxylase carboxyl transferase subunit alpha, found in Rhizobium etli (strain CIAT 652).